The sequence spans 268 residues: Proenkephalin-A (268 aa).

The signal sequence occupies residues Met1–Ala24. Disulfide bonds link Cys26-Cys48, Cys30-Cys52, and Cys33-Cys65. The tract at residues Thr163–Ser184 is disordered. 2 propeptides span residues Ser197–Gln208 and Val218–Gln228. Ser252 carries the phosphoserine modification.

This sequence belongs to the opioid neuropeptide precursor family. In terms of processing, proenkephalin-A is cleaved by CTSL to generate Met-enkephalin. Post-translationally, processed and degraded by ACE. Probably cleaved by ACE. In terms of processing, processed by ACE to generate Met-enkephalin in the nucleus accumbens of the brain. Post-translationally, the N-terminal domain contains 6 conserved cysteines thought to be involved in disulfide bonding and/or processing. As to expression, spermatogenic and somatic cells.

The protein resides in the cytoplasmic vesicle. It localises to the secretory vesicle. Its subcellular location is the chromaffin granule lumen. The protein localises to the secreted. Functionally, neuropeptide that competes with and mimic the effects of opiate drugs. They play a role in a number of physiologic functions, including pain perception and responses to stress. In terms of biological role, met-enkephalin-Arg-Phe neuropeptide acts as a strong ligand of Mu-type opioid receptor OPRM1. Met-enkephalin-Arg-Phe-binding to OPRM1 in the nucleus accumbens of the brain increases activation of OPRM1, leading to long-term synaptic depression of glutamate release. Its function is as follows. Increases glutamate release in the striatum and decreases GABA concentration in the striatum. Increases glutamate release in the striatum. This Mus musculus (Mouse) protein is Proenkephalin-A (Penk).